A 159-amino-acid chain; its full sequence is Probable minor fimbrial protein (159 aa).

A propeptide spans 1-6 (MKKMHG) (leader sequence). Position 7 is an N-methylphenylalanine (phenylalanine 7). The chain crosses the membrane as a helical span at residues 7 to 27 (FTLIELMIVVAIIGVLASTAL). 2 cysteine pairs are disulfide-bonded: cysteine 56-cysteine 71 and cysteine 140-cysteine 153.

It belongs to the N-Me-Phe pilin family. The pili are polar flexible filaments of about 5.4 nanometers diameter and 2.5 micrometers average length; they consist of only a single polypeptide chain arranged in a helical configuration of five subunits per turn in the assembled pilus.

It localises to the fimbrium. The protein localises to the membrane. In Dichelobacter nodosus (Bacteroides nodosus), this protein is Probable minor fimbrial protein (fimZ).